We begin with the raw amino-acid sequence, 60 residues long: Large ribosomal subunit protein uL30 (60 aa).

The protein belongs to the universal ribosomal protein uL30 family. Part of the 50S ribosomal subunit.

The protein is Large ribosomal subunit protein uL30 of Burkholderia mallei (strain NCTC 10247).